The following is a 427-amino-acid chain: Glutamate-1-semialdehyde 2,1-aminomutase (427 aa).

Lys265 carries the N6-(pyridoxal phosphate)lysine modification.

This sequence belongs to the class-III pyridoxal-phosphate-dependent aminotransferase family. HemL subfamily. In terms of assembly, homodimer. Pyridoxal 5'-phosphate serves as cofactor.

It is found in the cytoplasm. It carries out the reaction (S)-4-amino-5-oxopentanoate = 5-aminolevulinate. It functions in the pathway porphyrin-containing compound metabolism; protoporphyrin-IX biosynthesis; 5-aminolevulinate from L-glutamyl-tRNA(Glu): step 2/2. The chain is Glutamate-1-semialdehyde 2,1-aminomutase from Actinobacillus succinogenes (strain ATCC 55618 / DSM 22257 / CCUG 43843 / 130Z).